The sequence spans 253 residues: Ribonuclease 3 (253 aa).

In terms of domain architecture, RNase III spans 29-157; it reads VDELQKTIGH…MLGAVFLDAG (129 aa). E70 contacts Mg(2+). D74 is an active-site residue. The Mg(2+) site is built by D143 and E146. Residue E146 is part of the active site. One can recognise a DRBM domain in the interval 184–253; that stretch reads DYKSQLQELT…AARAVATLDK (70 aa).

The protein belongs to the ribonuclease III family. As to quaternary structure, homodimer. Mg(2+) is required as a cofactor.

Its subcellular location is the cytoplasm. It carries out the reaction Endonucleolytic cleavage to 5'-phosphomonoester.. Its function is as follows. Digests double-stranded RNA. Involved in the processing of primary rRNA transcript to yield the immediate precursors to the large and small rRNAs (23S and 16S). Processes some mRNAs, and tRNAs when they are encoded in the rRNA operon. Processes pre-crRNA and tracrRNA of type II CRISPR loci if present in the organism. The protein is Ribonuclease 3 of Nitratidesulfovibrio vulgaris (strain ATCC 29579 / DSM 644 / CCUG 34227 / NCIMB 8303 / VKM B-1760 / Hildenborough) (Desulfovibrio vulgaris).